A 279-amino-acid chain; its full sequence is Cyanocobalamin reductase / alkylcobalamin dealkylase (279 aa).

Residues aspartate 104, 115–118 (ILAQ), 129–131 (YYQ), cysteine 149, and isoleucine 160 contribute to the substrate site. The interval 239–279 (PSEHPSTTSELPLSLLTKPQNSRRARSWLSPSVSPPVSPGP) is disordered. Residues 243–257 (PSTTSELPLSLLTKP) are compositionally biased toward low complexity. A phosphoserine mark is found at serine 247, serine 272, and serine 276.

Belongs to the MMACHC family. Monomer in the absence of bound substrate. Homodimer; dimerization is triggered by binding to FMN or adenosylcobalamin. Interacts with LMBRD1 and ABCD4; the interaction ensures the transport of cobalamin from the lysosome to the cytoplasm. Forms a multiprotein complex with MMADHC, MTR and MTRR; the interaction with MTR could modulate MMACHC-dependent processing of cobalamin. Heterodimer with MMADHC; the interaction might play a role in the regulation of the balance between AdoCbl and MeCbl synthesis. It depends on FAD as a cofactor. Requires FMN as cofactor. Detected in liver and kidney (at protein level). Detected in embryos.

The protein localises to the cytoplasm. Its subcellular location is the cytosol. It carries out the reaction 2 cob(II)alamin-[cyanocobalamin reductase] + 2 hydrogen cyanide + NADP(+) = 2 cyanocob(III)alamin + 2 apo-[cyanocobalamin reductase] + NADPH + H(+). The enzyme catalyses apo-[alkylcobalamin reductase] + an R-cob(III)alamin + glutathione = cob(I)alamin-[alkylcobalamin reductase] + an S-substituted glutathione + H(+). The catalysed reaction is apo-[alkylcobalamin reductase] + methylcob(III)alamin + glutathione = S-methyl glutathione + cob(I)alamin-[alkylcobalamin reductase] + H(+). It catalyses the reaction apo-[alkylcobalamin reductase] + adenosylcob(III)alamin + glutathione = S-adenosylglutathione + cob(I)alamin-[alkylcobalamin reductase] + H(+). Functionally, cobalamin (vitamin B12) cytosolic chaperone that catalyzes the reductive decyanation of cyanocob(III)alamin (cyanocobalamin, CNCbl) to yield cob(II)alamin and cyanide, using FAD or FMN as cofactors and NADPH as cosubstrate. Cyanocobalamin constitutes the inactive form of vitamin B12 introduced from the diet, and is converted into the active cofactors methylcobalamin (MeCbl) involved in methionine biosynthesis, and 5'-deoxyadenosylcobalamin (AdoCbl) involved in the TCA cycle. Forms a complex with the lysosomal transporter ABCD4 and its chaperone LMBRD1, to transport cobalamin across the lysosomal membrane into the cytosol. The processing of cobalamin in the cytosol occurs in a multiprotein complex composed of at least MMACHC, MMADHC, MTRR (methionine synthase reductase) and MTR (methionine synthase) which may contribute to shuttle safely and efficiently cobalamin towards MTR in order to produce methionine. Also acts as a glutathione transferase by catalyzing the dealkylation of the alkylcob(III)alamins MeCbl and AdoCbl, using the thiolate of glutathione for nucleophilic displacement to generate cob(I)alamin and the corresponding glutathione thioether. The conversion of incoming MeCbl or AdoCbl into a common intermediate cob(I)alamin is necessary to meet the cellular needs for both cofactors. Cysteine and homocysteine cannot substitute for glutathione in this reaction. This chain is Cyanocobalamin reductase / alkylcobalamin dealkylase, found in Mus musculus (Mouse).